Consider the following 182-residue polypeptide: Large ribosomal subunit protein uL5c (182 aa).

This sequence belongs to the universal ribosomal protein uL5 family. As to quaternary structure, part of the 50S ribosomal subunit; contacts the 5S rRNA.

Its subcellular location is the plastid. The protein resides in the chloroplast. Binds 5S rRNA, forms part of the central protuberance of the 50S subunit. This chain is Large ribosomal subunit protein uL5c (rpl5), found in Emiliania huxleyi (Coccolithophore).